The sequence spans 1819 residues: Protein REDUCED CHLOROPLAST COVERAGE 2 (1819 aa).

Residues 1-17 (MAPKAGKTKPHKSKGEK) are compositionally biased toward basic residues. Disordered regions lie at residues 1–23 (MAPK…KEEK), 128–180 (KPPV…GACE), 595–619 (QASS…GLGK), and 634–664 (KANK…LEKQ). Composition is skewed to basic and acidic residues over residues 135 to 145 (LPKDSEKKESG) and 600 to 612 (SESK…KPEP). Residues 329 to 603 (EDETWGGDGG…NQASSKSESK (275 aa)) form the Clu domain. The stretch at 649–680 (TDNTSETEDQKELEKQNEEIEKMWKELVTETA) forms a coiled coil. TPR repeat units lie at residues 892 to 925 (GRTL…LVAV), 934 to 967 (AGAY…NERE), 976 to 1009 (MKSY…LHLT), 1018 to 1051 (AATY…NQRL), and 1060 to 1093 (AASY…LQAK). 6 disordered regions span residues 1152-1360 (SGIK…PMLS), 1413-1456 (KVNA…SPKE), 1468-1513 (KAFP…SESV), 1527-1573 (LKTV…ASAP), 1616-1670 (STPH…PRIM), and 1731-1809 (LVSE…DYSD). Composition is skewed to basic and acidic residues over residues 1199–1224 (SSDK…EQSK) and 1230–1239 (KLVKPEATVH). S1244 is modified (phosphoserine). Residues 1269–1313 (KLNTNFMNVTQQPSRSRGKSTNFTSPRTSSNELSISVAGSTSSPA) are compositionally biased toward polar residues. Phosphoserine is present on S1320. Polar residues predominate over residues 1343-1354 (LASSACTEQINK). 2 stretches are compositionally biased toward polar residues: residues 1496–1511 (CLLN…NGSE) and 1536–1546 (NLPNGDSSPKS). The segment covering 1551–1566 (DGEKQDACEAQKEMSK) has biased composition (basic and acidic residues). Positions 1650-1665 (SFPNSTESNGEANQFN) are enriched in polar residues. The segment covering 1742–1759 (SEEKSGSEEESNNDKNAG) has biased composition (basic and acidic residues). Over residues 1767–1778 (QETTDTPENGHS) the composition is skewed to polar residues. The segment covering 1785–1800 (TTSHETCDEKNGERQG) has biased composition (basic and acidic residues).

As to expression, expressed in the non-epidermal tissues of the true leaves. Not detected in the vegetative shoot meristem and leaf primordia.

It localises to the nucleus. Its subcellular location is the cytoplasm. The protein localises to the cytosol. Functionally, negatively regulates meristematic tissue proliferation by integrating developmental signals with carbon source availability. May act as the scaffold of a protein complex, which sequesters key factors that are required for the G2 to M transition in meristematic tissues. Together with REC2, REC3 and FMT/CLU, contributes to the establishment of the cellular volume devoted to the chloroplast compartment. The polypeptide is Protein REDUCED CHLOROPLAST COVERAGE 2 (Arabidopsis thaliana (Mouse-ear cress)).